Consider the following 172-residue polypeptide: Adenine phosphoribosyltransferase (172 aa).

It belongs to the purine/pyrimidine phosphoribosyltransferase family. Homodimer.

It is found in the cytoplasm. It catalyses the reaction AMP + diphosphate = 5-phospho-alpha-D-ribose 1-diphosphate + adenine. Its pathway is purine metabolism; AMP biosynthesis via salvage pathway; AMP from adenine: step 1/1. Its function is as follows. Catalyzes a salvage reaction resulting in the formation of AMP, that is energically less costly than de novo synthesis. This Prochlorococcus marinus (strain NATL2A) protein is Adenine phosphoribosyltransferase.